The sequence spans 119 residues: Large ribosomal subunit protein eL31 (119 aa).

It belongs to the eukaryotic ribosomal protein eL31 family.

This Cyanophora paradoxa protein is Large ribosomal subunit protein eL31 (RPL31).